We begin with the raw amino-acid sequence, 156 residues long: Small ribosomal subunit protein uS7 (156 aa).

Belongs to the universal ribosomal protein uS7 family. Part of the 30S ribosomal subunit. Contacts proteins S9 and S11.

In terms of biological role, one of the primary rRNA binding proteins, it binds directly to 16S rRNA where it nucleates assembly of the head domain of the 30S subunit. Is located at the subunit interface close to the decoding center, probably blocks exit of the E-site tRNA. In Acidithiobacillus ferrooxidans (strain ATCC 53993 / BNL-5-31) (Leptospirillum ferrooxidans (ATCC 53993)), this protein is Small ribosomal subunit protein uS7.